The chain runs to 103 residues: MTEILRIELVSVNPESLEKVSRMFKEIADKMGVRVKGPIPLPTKRLRVTALRNPSGEGTNRYDKYELRIHKRIIDIPNPDERYIRSIMGITLPDDVKISIVLM.

The protein belongs to the universal ribosomal protein uS10 family. In terms of assembly, part of the 30S ribosomal subunit.

Its function is as follows. Involved in the binding of tRNA to the ribosomes. The chain is Small ribosomal subunit protein uS10 from Korarchaeum cryptofilum (strain OPF8).